The sequence spans 129 residues: Protein Turandot A1/2 (129 aa).

A signal peptide spans 1 to 21 (MNSSTALMCFALLLISPLCLG). The N-linked (GlcNAc...) asparagine glycan is linked to Asn49.

It belongs to the Turandot family.

The protein resides in the secreted. Functionally, a humoral factor that plays a role in stress tolerance; gives increased resistance to the lethal effects of bacterial challenge and stress. Regulated by the JAK/STAT pathway and NF-KB-like Relish pathway in the fat body, upd3 in the hemocytes and Mekk1 in response to septic injury and consequent immune response. In Drosophila sechellia (Fruit fly), this protein is Protein Turandot A1/2 (TotA1).